The primary structure comprises 214 residues: Potassium/proton antiporter CemA (214 aa).

Transmembrane regions (helical) follow at residues 92-112 (ILHL…SILG) and 174-194 (IISG…KYWI).

It belongs to the CemA family.

The protein localises to the plastid. Its subcellular location is the chloroplast inner membrane. It catalyses the reaction K(+)(in) + H(+)(out) = K(+)(out) + H(+)(in). Its function is as follows. Contributes to K(+)/H(+) antiport activity by supporting proton efflux to control proton extrusion and homeostasis in chloroplasts in a light-dependent manner to modulate photosynthesis. Prevents excessive induction of non-photochemical quenching (NPQ) under continuous-light conditions. Indirectly promotes efficient inorganic carbon uptake into chloroplasts. In Oenothera argillicola (Appalachian evening primrose), this protein is Potassium/proton antiporter CemA.